The primary structure comprises 537 residues: ATP synthase subunit alpha (537 aa).

Gly171–Thr178 contacts ATP.

It belongs to the ATPase alpha/beta chains family. F-type ATPases have 2 components, CF(1) - the catalytic core - and CF(0) - the membrane proton channel. CF(1) has five subunits: alpha(3), beta(3), gamma(1), delta(1), epsilon(1). CF(0) has four main subunits: a, b, b' and c.

It localises to the cell inner membrane. The catalysed reaction is ATP + H2O + 4 H(+)(in) = ADP + phosphate + 5 H(+)(out). In terms of biological role, produces ATP from ADP in the presence of a proton gradient across the membrane. The alpha chain is a regulatory subunit. In Chloroherpeton thalassium (strain ATCC 35110 / GB-78), this protein is ATP synthase subunit alpha.